Here is a 178-residue protein sequence, read N- to C-terminus: MSGGKYVDSEGHLYTVPIREQGNIYKPNNKTMADEMNEKQVYDAHTKEIDLVNRDPKHLNDDVVKIDFEDVIAEPEGTHSFDGIWKASFTTFTVTKYWFYRLLSAVFGIPMALIWGIYFAIVSFLHIWVVVPYIKSFLIEIQCISRVYSIYIHTFCDPLFEAFGKVFSNIRINTQKEI.

Serine 2 bears the N-acetylserine mark. Serine 2 is subject to Phosphoserine. The tract at residues 2–94 is required for homooligomerization; it reads SGGKYVDSEG…WKASFTTFTV (93 aa). Topologically, residues 2-104 are cytoplasmic; sequence SGGKYVDSEG…TKYWFYRLLS (103 aa). Position 5 is an N6-acetyllysine; alternate (lysine 5). Lysine 5 is covalently cross-linked (Glycyl lysine isopeptide (Lys-Gly) (interchain with G-Cter in ubiquitin); alternate). Tyrosine 6 is subject to Phosphotyrosine. A Phosphoserine modification is found at serine 9. Tyrosine 14 carries the phosphotyrosine; by ABL1 modification. Residue tyrosine 25 is modified to Phosphotyrosine. Glycyl lysine isopeptide (Lys-Gly) (interchain with G-Cter in ubiquitin) cross-links involve residues lysine 26, lysine 30, lysine 39, lysine 47, and lysine 57. The interaction with CAVIN3 stretch occupies residues 82 to 94; the sequence is DGIWKASFTTFTV. The segment at residues 105-125 is an intramembrane region (helical); sequence AVFGIPMALIWGIYFAIVSFL. The Cytoplasmic segment spans residues 126 to 178; sequence HIWVVVPYIKSFLIEIQCISRVYSIYIHTFCDPLFEAFGKVFSNIRINTQKEI. Residues 131–142 are interacts with SPRY1, SPRY2, SPRY3 and SPRY4; sequence VPYIKSFLIEIQ. S-palmitoyl cysteine attachment occurs at residues cysteine 143 and cysteine 156. The segment at 149–160 is interacts with SPRY1, SPRY2, and SPRY4; the sequence is SIYIHTFCDPLF. The interacts with SPRY1, SPRY2, SPRY3 and SPRY4 stretch occupies residues 167–178; the sequence is FSNIRINTQKEI.

Belongs to the caveolin family. Homooligomer. Interacts (via the N-terminus) with DPP4; the interaction is direct. Forms a stable heterooligomeric complex with CAV2 that targets to lipid rafts and drives caveolae formation. Interacts with PACSIN2; this interaction induces membrane tubulation. Interacts with BMX, BTK, CTNNB1, CDH1, GLIPR2, JUP, NOSTRIN, SNAP25 and STX1A. Interacts with SLC7A9. Interacts with TGFBR1. Interacts with CAVIN3 (via leucine-zipper domain) in a cholesterol-sensitive manner. Interacts with CAVIN1. Interacts with EHD2 in a cholesterol-dependent manner. Forms a ternary complex with UBXN6 and VCP; mediates CAV1 targeting to lysosomes for degradation. Interacts with ABCG1; this interaction regulates ABCG1-mediated cholesterol efflux. Interacts with NEU3; this interaction enhances NEU3 sialidase activity within caveola. Interacts (via C-terminus) with SPRY1, SPRY2 (via C-terminus), SPRY3, and SPRY4. In terms of processing, phosphorylated at Tyr-14 by ABL1 in response to oxidative stress. Post-translationally, ubiquitinated. Undergo monoubiquitination and multi- and/or polyubiquitination. Monoubiquitination of N-terminal lysines promotes integration in a ternary complex with UBXN6 and VCP which promotes oligomeric CAV1 targeting to lysosomes for degradation. Ubiquitinated by ZNRF1; leading to degradation and modulation of the TLR4-mediated immune response.

It localises to the golgi apparatus membrane. The protein localises to the cell membrane. The protein resides in the membrane. Its subcellular location is the caveola. It is found in the membrane raft. Its function is as follows. May act as a scaffolding protein within caveolar membranes. Forms a stable heterooligomeric complex with CAV2 that targets to lipid rafts and drives caveolae formation. Mediates the recruitment of CAVIN proteins (CAVIN1/2/3/4) to the caveolae. Interacts directly with G-protein alpha subunits and can functionally regulate their activity. Involved in the costimulatory signal essential for T-cell receptor (TCR)-mediated T-cell activation. Its binding to DPP4 induces T-cell proliferation and NF-kappa-B activation in a T-cell receptor/CD3-dependent manner. Recruits CTNNB1 to caveolar membranes and may regulate CTNNB1-mediated signaling through the Wnt pathway. Negatively regulates TGFB1-mediated activation of SMAD2/3 by mediating the internalization of TGFBR1 from membrane rafts leading to its subsequent degradation. Binds 20(S)-hydroxycholesterol (20(S)-OHC). The sequence is that of Caveolin-1 (CAV1) from Rhinolophus ferrumequinum (Greater horseshoe bat).